The following is a 366-amino-acid chain: Cobalt-precorrin-5B C(1)-methyltransferase (366 aa).

This sequence belongs to the CbiD family.

It carries out the reaction Co-precorrin-5B + S-adenosyl-L-methionine = Co-precorrin-6A + S-adenosyl-L-homocysteine. Its pathway is cofactor biosynthesis; adenosylcobalamin biosynthesis; cob(II)yrinate a,c-diamide from sirohydrochlorin (anaerobic route): step 6/10. Catalyzes the methylation of C-1 in cobalt-precorrin-5B to form cobalt-precorrin-6A. The sequence is that of Cobalt-precorrin-5B C(1)-methyltransferase from Paraburkholderia phymatum (strain DSM 17167 / CIP 108236 / LMG 21445 / STM815) (Burkholderia phymatum).